A 161-amino-acid polypeptide reads, in one-letter code: Glycine cleavage system H protein 3 (161 aa).

Residues 40–122 enclose the Lipoyl-binding domain; the sequence is TVTLGLTDVG…YGDAWIVKIK (83 aa). Lys-81 is modified (N6-lipoyllysine).

It belongs to the GcvH family. The glycine cleavage system is composed of four proteins: P, T, L and H. Requires (R)-lipoate as cofactor.

Its function is as follows. The glycine cleavage system catalyzes the degradation of glycine. The H protein shuttles the methylamine group of glycine from the P protein to the T protein. In Aquifex aeolicus (strain VF5), this protein is Glycine cleavage system H protein 3.